Consider the following 233-residue polypeptide: MADS-box transcription factor 20 (233 aa).

The MADS-box domain occupies 1-61; it reads MGRGKVQVRR…GNLFHYASSH (61 aa). In terms of domain architecture, K-box spans 91 to 184; the sequence is EGSMSYDHIK…PTKAAAPPAC (94 aa).

Expressed in developing seeds and seedling shoots.

The protein resides in the nucleus. Its function is as follows. Probable transcription factor. The chain is MADS-box transcription factor 20 (MADS20) from Oryza sativa subsp. japonica (Rice).